A 483-amino-acid polypeptide reads, in one-letter code: Sphingomyelin phosphodiesterase 5 (483 aa).

The tract at residues 1 to 20 (MSLPDISRRRSPVPQEDWPL) is disordered. The helical transmembrane segment at 80 to 100 (VLLPLVVVGLPLALVGLALWL) threads the bilayer. Mg(2+) is bound at residue Glu-209. His-471 functions as the Proton acceptor in the catalytic mechanism.

This sequence belongs to the neutral sphingomyelinase family. Requires Mg(2+) as cofactor. Mn(2+) serves as cofactor. As to expression, highly expressed in testis, pancreas, epididymis, and brain.

It is found in the mitochondrion inner membrane. Its subcellular location is the endoplasmic reticulum membrane. The enzyme catalyses a sphingomyelin + H2O = phosphocholine + an N-acylsphing-4-enine + H(+). The catalysed reaction is N-(hexadecanoyl)-sphing-4-enine-1-phosphocholine + H2O = N-hexadecanoylsphing-4-enine + phosphocholine + H(+). It participates in lipid metabolism; sphingolipid metabolism. Activated by anionic phospholipids, specially cardiolipin and phosphatidylserine. Its function is as follows. Catalyzes the hydrolysis of membrane sphingomyelin to form phosphorylcholine and ceramide. The protein is Sphingomyelin phosphodiesterase 5 of Mus musculus (Mouse).